Here is an 84-residue protein sequence, read N- to C-terminus: uncharacterized protein (84 aa).

The 2Fe-2S ferredoxin-type domain occupies 2 to 84 (ARVTLRITGT…RAKGDIEIEM (83 aa)). [2Fe-2S] cluster contacts are provided by Cys-37, Cys-42, Cys-45, and Cys-74.

[2Fe-2S] cluster is required as a cofactor.

This is an uncharacterized protein from Escherichia coli O6:H1 (strain CFT073 / ATCC 700928 / UPEC).